A 406-amino-acid chain; its full sequence is 2,3-diketo-5-methylthiopentyl-1-phosphate enolase (406 aa).

The active-site Proton acceptor is Lys94. Substrate contacts are provided by residues Lys143, 169–172 (KDDE), His260, Gly332, and 354–355 (GG). 3 residues coordinate Mg(2+): Lys169, Asp171, and Glu172. Residue Lys169 is modified to N6-carboxylysine.

Belongs to the RuBisCO large chain family. Type IV subfamily. Homodimer. It depends on Mg(2+) as a cofactor.

It catalyses the reaction 5-methylsulfanyl-2,3-dioxopentyl phosphate = 2-hydroxy-5-methylsulfanyl-3-oxopent-1-enyl phosphate. It participates in amino-acid biosynthesis; L-methionine biosynthesis via salvage pathway; L-methionine from S-methyl-5-thio-alpha-D-ribose 1-phosphate: step 3/6. Catalyzes the enolization of 2,3-diketo-5-methylthiopentyl-1-phosphate (DK-MTP-1-P) into 2-hydroxy-3-keto-5-methylthiopentenyl-1-phosphate (HK-MTPenyl-1-P). The chain is 2,3-diketo-5-methylthiopentyl-1-phosphate enolase from Bacillus pumilus (strain SAFR-032).